Here is a 398-residue protein sequence, read N- to C-terminus: S-adenosylmethionine synthase (398 aa).

His-17 contacts ATP. Asp-19 lines the Mg(2+) pocket. Glu-45 contacts K(+). Residues Glu-58 and Gln-101 each coordinate L-methionine. The interval 101 to 111 is flexible loop; sequence QSPDIAQGVDK. Residues 176–178, 243–244, Asp-252, 258–259, and Lys-279 each bind ATP; these read DGK, RF, and RK. An L-methionine-binding site is contributed by Asp-252. Lys-283 lines the L-methionine pocket.

The protein belongs to the AdoMet synthase family. In terms of assembly, homotetramer; dimer of dimers. Mg(2+) is required as a cofactor. It depends on K(+) as a cofactor.

It is found in the cytoplasm. The catalysed reaction is L-methionine + ATP + H2O = S-adenosyl-L-methionine + phosphate + diphosphate. Its pathway is amino-acid biosynthesis; S-adenosyl-L-methionine biosynthesis; S-adenosyl-L-methionine from L-methionine: step 1/1. Functionally, catalyzes the formation of S-adenosylmethionine (AdoMet) from methionine and ATP. The overall synthetic reaction is composed of two sequential steps, AdoMet formation and the subsequent tripolyphosphate hydrolysis which occurs prior to release of AdoMet from the enzyme. The protein is S-adenosylmethionine synthase of Staphylococcus aureus (strain Mu3 / ATCC 700698).